The primary structure comprises 310 residues: UDP-N-acetylenolpyruvoylglucosamine reductase (310 aa).

One can recognise an FAD-binding PCMH-type domain in the interval 34 to 211; the sequence is TGGPAQCVYV…REDMGKIAQE (178 aa). Arg-177 is a catalytic residue. Residue Ser-225 is the Proton donor of the active site. Glu-295 is an active-site residue.

It belongs to the MurB family. It depends on FAD as a cofactor.

It is found in the cytoplasm. The enzyme catalyses UDP-N-acetyl-alpha-D-muramate + NADP(+) = UDP-N-acetyl-3-O-(1-carboxyvinyl)-alpha-D-glucosamine + NADPH + H(+). The protein operates within cell wall biogenesis; peptidoglycan biosynthesis. In terms of biological role, cell wall formation. The protein is UDP-N-acetylenolpyruvoylglucosamine reductase of Beijerinckia indica subsp. indica (strain ATCC 9039 / DSM 1715 / NCIMB 8712).